Consider the following 563-residue polypeptide: uncharacterized protein (563 aa).

The segment at residues 19 to 45 (CLICRRRKVKCDRQQPCSRCKERNEVC) is a DNA-binding region (zn(2)-C6 fungal-type). Residues 56-78 (NVGPHPSHSENASDSETTLEVSP) form a disordered region. Over residues 64–75 (SENASDSETTLE) the composition is skewed to polar residues.

It localises to the nucleus. This is an uncharacterized protein from Schizosaccharomyces pombe (strain 972 / ATCC 24843) (Fission yeast).